We begin with the raw amino-acid sequence, 264 residues long: Regulatory protein RecX (264 aa).

Belongs to the RecX family.

Its subcellular location is the cytoplasm. Modulates RecA activity. The sequence is that of Regulatory protein RecX from Lacticaseibacillus casei (strain BL23) (Lactobacillus casei).